Reading from the N-terminus, the 392-residue chain is Phospho-N-acetylmuramoyl-pentapeptide-transferase (392 aa).

Transmembrane regions (helical) follow at residues 28-48 (IIAA…KLIA), 76-96 (TMGG…FADL), 101-121 (VWVM…DDWL), 137-157 (MVLQ…TWTL), 181-201 (WFNP…VVGT), 213-233 (GLAI…CYVA), 268-288 (GAEL…FLWF), 295-315 (VFMG…LAML), 320-340 (VVSA…MIQV), and 369-389 (KIIV…LLSL).

The protein belongs to the glycosyltransferase 4 family. MraY subfamily. The cofactor is Mg(2+).

It is found in the cell inner membrane. The enzyme catalyses UDP-N-acetyl-alpha-D-muramoyl-L-alanyl-gamma-D-glutamyl-meso-2,6-diaminopimeloyl-D-alanyl-D-alanine + di-trans,octa-cis-undecaprenyl phosphate = di-trans,octa-cis-undecaprenyl diphospho-N-acetyl-alpha-D-muramoyl-L-alanyl-D-glutamyl-meso-2,6-diaminopimeloyl-D-alanyl-D-alanine + UMP. It participates in cell wall biogenesis; peptidoglycan biosynthesis. In terms of biological role, catalyzes the initial step of the lipid cycle reactions in the biosynthesis of the cell wall peptidoglycan: transfers peptidoglycan precursor phospho-MurNAc-pentapeptide from UDP-MurNAc-pentapeptide onto the lipid carrier undecaprenyl phosphate, yielding undecaprenyl-pyrophosphoryl-MurNAc-pentapeptide, known as lipid I. The protein is Phospho-N-acetylmuramoyl-pentapeptide-transferase of Myxococcus xanthus (strain DK1622).